Reading from the N-terminus, the 241-residue chain is Small ribosomal subunit protein uS3 (241 aa).

In terms of domain architecture, KH type-2 spans 39–107; that stretch reads IREILHKELK…DVVINIVEIR (69 aa). A disordered region spans residues 217 to 241; that stretch reads KRMAEGETGGGGDRGGRQRRDNAAV. Positions 230–241 are enriched in basic and acidic residues; it reads RGGRQRRDNAAV.

Belongs to the universal ribosomal protein uS3 family. As to quaternary structure, part of the 30S ribosomal subunit. Forms a tight complex with proteins S10 and S14.

Its function is as follows. Binds the lower part of the 30S subunit head. Binds mRNA in the 70S ribosome, positioning it for translation. This Bradyrhizobium diazoefficiens (strain JCM 10833 / BCRC 13528 / IAM 13628 / NBRC 14792 / USDA 110) protein is Small ribosomal subunit protein uS3.